The chain runs to 237 residues: Sugar fermentation stimulation protein homolog (237 aa).

It belongs to the SfsA family.

This is Sugar fermentation stimulation protein homolog from Pseudomonas putida (strain ATCC 700007 / DSM 6899 / JCM 31910 / BCRC 17059 / LMG 24140 / F1).